We begin with the raw amino-acid sequence, 162 residues long: Beta-carotene hydroxylase (162 aa).

Residues 8–135 (VATVLVMELT…GRDHCVSFGF (128 aa)) enclose the Fatty acid hydroxylase domain.

Belongs to the sterol desaturase family.

The enzyme catalyses all-trans-beta-carotene + 4 reduced [2Fe-2S]-[ferredoxin] + 2 O2 + 4 H(+) = all-trans-zeaxanthin + 4 oxidized [2Fe-2S]-[ferredoxin] + 2 H2O. It participates in carotenoid biosynthesis; astaxanthin biosynthesis. Catalyzes the hydroxylation reaction from beta-carotene to zeaxanthin via beta-cryptoxanthin. The protein is Beta-carotene hydroxylase (crtZ) of Paracoccus sp. (strain PC1) (Alcaligenes sp. (strain PC1)).